A 417-amino-acid polypeptide reads, in one-letter code: Gamma-glutamyl phosphate reductase (417 aa).

The protein belongs to the gamma-glutamyl phosphate reductase family.

The protein localises to the cytoplasm. The catalysed reaction is L-glutamate 5-semialdehyde + phosphate + NADP(+) = L-glutamyl 5-phosphate + NADPH + H(+). Its pathway is amino-acid biosynthesis; L-proline biosynthesis; L-glutamate 5-semialdehyde from L-glutamate: step 2/2. Its function is as follows. Catalyzes the NADPH-dependent reduction of L-glutamate 5-phosphate into L-glutamate 5-semialdehyde and phosphate. The product spontaneously undergoes cyclization to form 1-pyrroline-5-carboxylate. This chain is Gamma-glutamyl phosphate reductase, found in Escherichia coli O127:H6 (strain E2348/69 / EPEC).